Here is a 581-residue protein sequence, read N- to C-terminus: Fibrous sheath-interacting protein 1 (581 aa).

The tract at residues 1–77 (MDIIKGNLDG…SNDDKQESCS (77 aa)) is disordered. Residues 14-30 (PASNSRIRPGSRSSNAS) show a composition bias toward polar residues. A compositionally biased stretch (basic and acidic residues) spans 52-77 (GKEDHSESSNTENRRTSNDDKQESCS). The residue at position 87 (Ser87) is a Phosphoserine. The stretch at 105-153 (EPKLKELDSQLQDAIQKMKKLDKILAKKQRREKEIKKQGLEMRIKLWEE) forms a coiled coil. 2 disordered regions span residues 338–365 (SSFS…VTPG) and 555–581 (HLKL…CKEP). Basic and acidic residues-rich tracts occupy residues 344 to 360 (LENR…ERNM) and 569 to 581 (QETK…CKEP).

Belongs to the FSIP1 family.

The chain is Fibrous sheath-interacting protein 1 (FSIP1) from Homo sapiens (Human).